A 254-amino-acid polypeptide reads, in one-letter code: Adenosylcobinamide-GDP ribazoletransferase (254 aa).

Helical transmembrane passes span 36 to 56 (YYPL…TLLL), 61 to 81 (PLVT…GIHL), 114 to 134 (ALSA…LLAL), 138 to 158 (LVPY…LIGV), 197 to 217 (WVLQ…ILLF), and 232 to 252 (LYGA…FPLL).

It belongs to the CobS family. The cofactor is Mg(2+).

The protein localises to the cell membrane. The enzyme catalyses alpha-ribazole + adenosylcob(III)inamide-GDP = adenosylcob(III)alamin + GMP + H(+). The catalysed reaction is alpha-ribazole 5'-phosphate + adenosylcob(III)inamide-GDP = adenosylcob(III)alamin 5'-phosphate + GMP + H(+). It functions in the pathway cofactor biosynthesis; adenosylcobalamin biosynthesis; adenosylcobalamin from cob(II)yrinate a,c-diamide: step 7/7. Its function is as follows. Joins adenosylcobinamide-GDP and alpha-ribazole to generate adenosylcobalamin (Ado-cobalamin). Also synthesizes adenosylcobalamin 5'-phosphate from adenosylcobinamide-GDP and alpha-ribazole 5'-phosphate. The chain is Adenosylcobinamide-GDP ribazoletransferase from Desulfitobacterium hafniense (strain Y51).